The following is a 349-amino-acid chain: GMP reductase (349 aa).

An NADP(+)-binding site is contributed by 108–131 (IDFLKIKKIFLLSSELKYICIDVA). The K(+) site is built by Gly181 and Gly183. Cys186 functions as the Thioimidate intermediate in the catalytic mechanism. 216-239 (IISDGGCTVSGDIAKAFGGGADFV) is an NADP(+) binding site.

The protein belongs to the IMPDH/GMPR family. GuaC type 1 subfamily. As to quaternary structure, homotetramer.

It carries out the reaction IMP + NH4(+) + NADP(+) = GMP + NADPH + 2 H(+). In terms of biological role, catalyzes the irreversible NADPH-dependent deamination of GMP to IMP. It functions in the conversion of nucleobase, nucleoside and nucleotide derivatives of G to A nucleotides, and in maintaining the intracellular balance of A and G nucleotides. The protein is GMP reductase of Buchnera aphidicola subsp. Acyrthosiphon pisum (strain 5A).